We begin with the raw amino-acid sequence, 225 residues long: Cytochrome c oxidase subunit 2 (225 aa).

At 1-25 (MSTWFMFMFQESNSYYADNLISFHN) the chain is on the mitochondrial intermembrane side. Residues 26–47 (MVMMIIIMISTLTVYIILDLFM) form a helical membrane-spanning segment. Residues 48–62 (NKFSNLFLLKNHNIE) are Mitochondrial matrix-facing. Residues 63 to 82 (IIWTIIPIIILLIICFPSLK) traverse the membrane as a helical segment. Residues 83 to 225 (ILYLIDEIVN…YFLNWVNKQI (143 aa)) are Mitochondrial intermembrane-facing. Positions 159, 194, 196, 198, 202, and 205 each coordinate Cu cation. Glu196 serves as a coordination point for Mg(2+).

It belongs to the cytochrome c oxidase subunit 2 family. Component of the cytochrome c oxidase (complex IV, CIV), a multisubunit enzyme composed of a catalytic core of 3 subunits and several supernumerary subunits. The complex exists as a monomer or a dimer and forms supercomplexes (SCs) in the inner mitochondrial membrane with ubiquinol-cytochrome c oxidoreductase (cytochrome b-c1 complex, complex III, CIII). Requires Cu cation as cofactor.

It is found in the mitochondrion inner membrane. The enzyme catalyses 4 Fe(II)-[cytochrome c] + O2 + 8 H(+)(in) = 4 Fe(III)-[cytochrome c] + 2 H2O + 4 H(+)(out). Its function is as follows. Component of the cytochrome c oxidase, the last enzyme in the mitochondrial electron transport chain which drives oxidative phosphorylation. The respiratory chain contains 3 multisubunit complexes succinate dehydrogenase (complex II, CII), ubiquinol-cytochrome c oxidoreductase (cytochrome b-c1 complex, complex III, CIII) and cytochrome c oxidase (complex IV, CIV), that cooperate to transfer electrons derived from NADH and succinate to molecular oxygen, creating an electrochemical gradient over the inner membrane that drives transmembrane transport and the ATP synthase. Cytochrome c oxidase is the component of the respiratory chain that catalyzes the reduction of oxygen to water. Electrons originating from reduced cytochrome c in the intermembrane space (IMS) are transferred via the dinuclear copper A center (CU(A)) of subunit 2 and heme A of subunit 1 to the active site in subunit 1, a binuclear center (BNC) formed by heme A3 and copper B (CU(B)). The BNC reduces molecular oxygen to 2 water molecules using 4 electrons from cytochrome c in the IMS and 4 protons from the mitochondrial matrix. The sequence is that of Cytochrome c oxidase subunit 2 (COII) from Apis mellifera ligustica (Common honeybee).